The following is a 481-amino-acid chain: Vanillin dehydrogenase (481 aa).

G228–G233 lines the NAD(+) pocket. Residues E250 and C284 contribute to the active site.

Belongs to the aldehyde dehydrogenase family.

The catalysed reaction is vanillin + NAD(+) + H2O = vanillate + NADH + 2 H(+). Catalyzes the NAD-dependent oxidation of vanillin to vanillic acid. The sequence is that of Vanillin dehydrogenase (vdh) from Pseudomonas sp. (strain HR199 / DSM 7063).